Reading from the N-terminus, the 675-residue chain is Metal-nicotianamine transporter YSL3 (675 aa).

A run of 14 helical transmembrane segments spans residues 42-62 (ITFR…VIVM), 66-86 (LTTG…FVFL), 114-134 (CAVA…LLGL), 159-179 (GIGW…LALV), 219-239 (VFGF…QWFF), 280-300 (IVNI…WPLI), 325-345 (VFIS…KILF), 386-406 (IPLW…IIAI), 408-428 (IMFP…APSL), 450-470 (VALF…AGLV), 504-524 (VSQA…FFLF), 556-576 (FSAL…FAVA), 602-622 (FLVG…VFAW), and 630-650 (AGLM…LWIL).

This sequence belongs to the YSL (TC 2.A.67.2) family. Expressed in leaves, anthers and pollen grains. Restricted to the vasculature.

It is found in the membrane. Functionally, may be involved in the lateral transport of nicotianamine-chelated metals in the vasculature. The chain is Metal-nicotianamine transporter YSL3 (YSL3) from Arabidopsis thaliana (Mouse-ear cress).